Consider the following 159-residue polypeptide: U1 small nuclear ribonucleoprotein C (159 aa).

The Matrin-type zinc-finger motif lies at 4-36 (FYCDYCDTYLTHDSPSVRKTHCSGRKHKENVKD). Position 8 is a phosphotyrosine (Tyr8). At Ser17 the chain carries Phosphoserine. An N6-acetyllysine modification is found at Lys52. 2 disordered regions span residues 62 to 96 (IPPT…PAPH) and 140 to 159 (RPPA…RPDR). Over residues 63 to 92 (PPTPFSAPPPAGAMIPPPPSLPGPPRPGMM) the composition is skewed to pro residues.

Belongs to the U1 small nuclear ribonucleoprotein C family. As to quaternary structure, component of the U1 snRNP. The U1 snRNP is composed of the U1 snRNA and the 7 core Sm proteins SNRPB, SNRPD1, SNRPD2, SNRPD3, SNRPE, SNRPF and SNRPG that assemble in a heptameric protein ring on the Sm site of the small nuclear RNA to form the core snRNP, and at least 3 U1 snRNP-specific proteins SNRNP70/U1-70K, SNRPA/U1-A and SNRPC/U1-C. SNRPC/U1-C interacts with U1 snRNA and the 5' splice-site region of the pre-mRNA. Interacts (via N-terminus) with TIA1 (via C-terminus); thereby promoting spliceosomal U1 snRNP recruitment to 5' splice sites.

It is found in the nucleus. Functionally, component of the spliceosomal U1 snRNP, which is essential for recognition of the pre-mRNA 5' splice-site and the subsequent assembly of the spliceosome. SNRPC/U1-C is directly involved in initial 5' splice-site recognition for both constitutive and regulated alternative splicing. The interaction with the 5' splice-site seems to precede base-pairing between the pre-mRNA and the U1 snRNA. Stimulates commitment or early (E) complex formation by stabilizing the base pairing of the 5' end of the U1 snRNA and the 5' splice-site region. The sequence is that of U1 small nuclear ribonucleoprotein C from Homo sapiens (Human).